The primary structure comprises 227 residues: UPF0758 protein Rxyl_1530 (227 aa).

The region spanning 106 to 227 is the MPN domain; it reads VISSPADVDG…YFSMKEHGML (122 aa). Zn(2+) contacts are provided by His-177, His-179, and Asp-190. The short motif at 177 to 190 is the JAMM motif element; that stretch reads HNHPSGRVEPSRED.

The protein belongs to the UPF0758 family.

The chain is UPF0758 protein Rxyl_1530 from Rubrobacter xylanophilus (strain DSM 9941 / JCM 11954 / NBRC 16129 / PRD-1).